We begin with the raw amino-acid sequence, 954 residues long: Glycine dehydrogenase (decarboxylating) (954 aa).

Position 704 is an N6-(pyridoxal phosphate)lysine (Lys704).

It belongs to the GcvP family. The glycine cleavage system is composed of four proteins: P, T, L and H. Requires pyridoxal 5'-phosphate as cofactor.

It catalyses the reaction N(6)-[(R)-lipoyl]-L-lysyl-[glycine-cleavage complex H protein] + glycine + H(+) = N(6)-[(R)-S(8)-aminomethyldihydrolipoyl]-L-lysyl-[glycine-cleavage complex H protein] + CO2. Functionally, the glycine cleavage system catalyzes the degradation of glycine. The P protein binds the alpha-amino group of glycine through its pyridoxal phosphate cofactor; CO(2) is released and the remaining methylamine moiety is then transferred to the lipoamide cofactor of the H protein. This is Glycine dehydrogenase (decarboxylating) from Rhizobium leguminosarum bv. trifolii (strain WSM2304).